The primary structure comprises 419 residues: UDP-N-acetylglucosamine 1-carboxyvinyltransferase (419 aa).

22–23 (KN) serves as a coordination point for phosphoenolpyruvate. Arg-93 contributes to the UDP-N-acetyl-alpha-D-glucosamine binding site. Cys-117 acts as the Proton donor in catalysis. Cys-117 is modified (2-(S-cysteinyl)pyruvic acid O-phosphothioketal). Positions 307 and 329 each coordinate UDP-N-acetyl-alpha-D-glucosamine.

It belongs to the EPSP synthase family. MurA subfamily.

It localises to the cytoplasm. The enzyme catalyses phosphoenolpyruvate + UDP-N-acetyl-alpha-D-glucosamine = UDP-N-acetyl-3-O-(1-carboxyvinyl)-alpha-D-glucosamine + phosphate. The protein operates within cell wall biogenesis; peptidoglycan biosynthesis. Functionally, cell wall formation. Adds enolpyruvyl to UDP-N-acetylglucosamine. In Shewanella baltica (strain OS195), this protein is UDP-N-acetylglucosamine 1-carboxyvinyltransferase.